A 194-amino-acid chain; its full sequence is dCTP deaminase (194 aa).

Residues 110–115, Asp128, 136–138, Tyr171, Lys178, and Gln182 each bind dCTP; these read RSSLAR and VLE. Catalysis depends on Glu138, which acts as the Proton donor/acceptor.

The protein belongs to the dCTP deaminase family. Homotrimer.

The catalysed reaction is dCTP + H2O + H(+) = dUTP + NH4(+). It functions in the pathway pyrimidine metabolism; dUMP biosynthesis; dUMP from dCTP (dUTP route): step 1/2. Functionally, catalyzes the deamination of dCTP to dUTP. In Glaesserella parasuis serovar 5 (strain SH0165) (Haemophilus parasuis), this protein is dCTP deaminase.